The following is a 254-amino-acid chain: Protein PET122, mitochondrial (254 aa).

Residues 1–8 (MLTITKRL) constitute a mitochondrion transit peptide. An essential for PET122 function region spans residues 185–254 (QAAALALFGR…IKRRGFEINT (70 aa)).

The protein localises to the mitochondrion inner membrane. Functionally, required for expression of the mitochondrial gene for cytochrome c oxidase subunit 3 (COX3). PET122 seems to work by directly interacting with the small ribosomal subunit to promote translation initiation on the COX3 mRNA. The polypeptide is Protein PET122, mitochondrial (PET122) (Saccharomyces cerevisiae (strain ATCC 204508 / S288c) (Baker's yeast)).